A 443-amino-acid polypeptide reads, in one-letter code: Diels-Alderase poxQ (443 aa).

A signal peptide spans 1–23 (MARIPLEFLSITLPVLLLAYCLA). Residues Asn-78, Asn-97, and Asn-145 are each glycosylated (N-linked (GlcNAc...) asparagine).

This sequence belongs to the Diels-Alderase family.

It functions in the pathway secondary metabolite biosynthesis. In terms of biological role, diels-Alderase; part of the gene cluster that mediates the biosynthesis of oxaleimides, cytotoxic compounds containing an unusual disubstituted succinimide moiety. The first step of the pathway is provided by the HR-PKS poxF that serves in a new mode of collaborative biosynthesis with the PKS-NRPS poxE, by providing the olefin containing amino acid substrate via the synthesis of an ACP-bound dec-4-enoate. The cytochrome P450 monooxygenase poxM-catalyzed oxidation at the alpha-position creates the enzyme-bound 2-hydroxydec-4-enoyl-ACP thioester, which may be prone to spontaneous hydrolysis to yield 2-hydroxydec-4-enoic acid due to increased electrophilicity of the carbonyl. 2-hydroxydec-4-enoic acid can then be further oxidized by poxM to yield the alpha-ketoacid 2-oxodec-4-enoicacid, which is reductively aminated by the aminotransferase poxL to yield (S,E)-2-aminodec-4-enoic acid. The Hybrid PKS-NRPS synthetase poxE then performs condensation between the octaketide product of its PKS modules and the amino group of (S,E)-2-aminodec-4-enoic acid which is activated and incorporated by the adenylation domain. The resulting aminoacyl product can be cyclized by the Diels-Alderase PoxQ and reductively released by the reductive (R) domain of poxE to yield an aldehyde intermediate. The released aldehyde is then substrate for a Knoevenagel condensation by the hydrolyase poxO followed by an oxidation at the 5-position of the pyrrolidone ring. The presence of the olefin from the amino acid building block allows for migration of the substituted allyl group to occur. This allylic transposition reaction takes place in a conjugate addition, semipinacol-like fashion to yield a succinimide intermediate. Iterative two-electron oxidations of the C7 methyl of the succinimide intermediate to the carboxylic acid can be catalyzed by one of two remaining cytochrome P450 monooxygenasess poxC or poxD to yield oxaleimide A. Subsequent oxidation yields the maleimide scaffold oxaleimide I. Both oxaleimide A and oxaleimide I can undergo oxidative modifications in the decalin ring to yield the series of products oxaleimides B to H. The sequence is that of Diels-Alderase poxQ from Penicillium oxalicum.